A 295-amino-acid polypeptide reads, in one-letter code: UDP-N-acetylenolpyruvoylglucosamine reductase (295 aa).

In terms of domain architecture, FAD-binding PCMH-type spans 24 to 188 (KVGGNAEIFF…LKAVFKVNKG (165 aa)). Residue Arg168 is part of the active site. Ser217 (proton donor) is an active-site residue. Glu287 is an active-site residue.

It belongs to the MurB family. Requires FAD as cofactor.

Its subcellular location is the cytoplasm. The catalysed reaction is UDP-N-acetyl-alpha-D-muramate + NADP(+) = UDP-N-acetyl-3-O-(1-carboxyvinyl)-alpha-D-glucosamine + NADPH + H(+). It participates in cell wall biogenesis; peptidoglycan biosynthesis. In terms of biological role, cell wall formation. The polypeptide is UDP-N-acetylenolpyruvoylglucosamine reductase (Rickettsia felis (strain ATCC VR-1525 / URRWXCal2) (Rickettsia azadi)).